We begin with the raw amino-acid sequence, 415 residues long: Branched-chain-amino-acid aminotransferase, cytosolic (415 aa).

Position 244 is an N6-(pyridoxal phosphate)lysine (Lys-244).

Belongs to the class-IV pyridoxal-phosphate-dependent aminotransferase family. Requires pyridoxal 5'-phosphate as cofactor.

It localises to the cytoplasm. It carries out the reaction L-leucine + 2-oxoglutarate = 4-methyl-2-oxopentanoate + L-glutamate. It catalyses the reaction L-isoleucine + 2-oxoglutarate = (S)-3-methyl-2-oxopentanoate + L-glutamate. The enzyme catalyses L-valine + 2-oxoglutarate = 3-methyl-2-oxobutanoate + L-glutamate. In terms of biological role, catalyzes the first reaction in the catabolism of the essential branched chain amino acids leucine, isoleucine, and valine. The protein is Branched-chain-amino-acid aminotransferase, cytosolic (bcat-1) of Caenorhabditis elegans.